The following is a 125-amino-acid chain: Small ribosomal subunit protein uS12 (125 aa).

A 3-methylthioaspartic acid modification is found at aspartate 89. A disordered region spans residues 104–125; that stretch reads LQGVKDRKQSRSKYGSKRPKKA. The span at 113 to 125 shows a compositional bias: basic residues; sequence SRSKYGSKRPKKA.

Belongs to the universal ribosomal protein uS12 family. As to quaternary structure, part of the 30S ribosomal subunit. Contacts proteins S8 and S17. May interact with IF1 in the 30S initiation complex.

In terms of biological role, with S4 and S5 plays an important role in translational accuracy. Interacts with and stabilizes bases of the 16S rRNA that are involved in tRNA selection in the A site and with the mRNA backbone. Located at the interface of the 30S and 50S subunits, it traverses the body of the 30S subunit contacting proteins on the other side and probably holding the rRNA structure together. The combined cluster of proteins S8, S12 and S17 appears to hold together the shoulder and platform of the 30S subunit. The sequence is that of Small ribosomal subunit protein uS12 from Leptothrix cholodnii (strain ATCC 51168 / LMG 8142 / SP-6) (Leptothrix discophora (strain SP-6)).